Here is a 146-residue protein sequence, read N- to C-terminus: MVMGLGLFLLVFMLGLGLTSPTLAQDNSRYRDFLSKHYDARPQGRNDRYCDSMMRRQGMTSPCKDINTFIHGNRRSIRAICGDENGNPYGENLRISRTPFQVTTCNLRGGSPRPPCRYRATAGFRNIVVACENGLPVHLDQSIFRP.

A signal peptide spans 1–24; that stretch reads MVMGLGLFLLVFMLGLGLTSPTLA. At Q25 the chain carries Pyrrolidone carboxylic acid. H37 serves as the catalytic Proton acceptor. R45 is a binding site for tRNA. Disulfide bonds link C50/C105, C63/C116, and C81/C131. The short motif at 55–59 is the Nucleolar localization signal element; sequence RRQGM. TRNA-binding residues include C105 and I127. Residue H138 is the Proton donor of the active site.

The protein belongs to the pancreatic ribonuclease family. Homodimer. Interacts with RNH1; inhibiting ANG ribonuclease activity. Interacts with PCNA.

It localises to the secreted. It is found in the nucleus. Its subcellular location is the nucleolus. The protein resides in the cytoplasm. The protein localises to the stress granule. Has weak tRNA ribonuclease activity by itself due to partial autoinhibition by its C-terminus, which folds into a short alpha-helix that partially occludes the substrate-binding site. In absence of stress, the ribonuclease activity is inhibited by RNH1 in the cytoplasm. In response to stress, dissociates from RNH1 in the cytoplasm and associates with cytoplasmic ribosomes with vacant A-sites: ribosomes directly activate the tRNA ribonuclease activity of ANG by refolding the C-terminal alpha-helix. In response to stress, the angiogenic activity of ANG is inhibited by RNH1 in the nucleus. Functionally, secreted ribonuclease that can either promote or restrict cell proliferation of target cells, depending on the context. Endocytosed in target cells via its receptor PLXNB2 and translocates to the cytoplasm or nucleus. Under stress conditions, localizes to the cytoplasm and promotes the assembly of stress granules (SGs): specifically cleaves a subset of tRNAs within anticodon loops to produce tRNA-derived stress-induced fragments (tiRNAs), resulting in translation repression and inhibition of cell proliferation. tiRNas also prevent formation of apoptosome, thereby promoting cell survival. Preferentially cleaves RNAs between a pyrimidine and an adenosine residue, suggesting that it cleaves the anticodon loop of tRNA(Ala) (32-UUAGCAU-38) after positions 33 and 36. Cleaves a subset of tRNAs, including tRNA(Ala), tRNA(Glu), tRNA(Gly), tRNA(Lys), tRNA(Val), tRNA(His), tRNA(Asp) and tRNA(Sec). Under growth conditions and in differentiated cells, translocates to the nucleus and stimulates ribosomal RNA (rRNA) transcription, including that containing the initiation site sequences of 45S rRNA, thereby promoting cell growth and proliferation. Angiogenin induces vascularization of normal and malignant tissues via its ability to promote rRNA transcription. Involved in hematopoietic stem and progenitor cell (HSPC) growth and survival by promoting rRNA transcription in growth conditions and inhibiting translation in response to stress, respectively. Mediates the crosstalk between myeloid and intestinal epithelial cells to protect the intestinal epithelial barrier integrity: secreted by myeloid cells and promotes intestinal epithelial cells proliferation and survival. Also mediates osteoclast-endothelial cell crosstalk in growing bone: produced by osteoclasts and protects the neighboring vascular cells against senescence by promoting rRNA transcription. This is Angiogenin (ANG) from Miopithecus talapoin (Angolan talapoin).